A 151-amino-acid chain; its full sequence is Major curlin subunit (151 aa).

The first 20 residues, 1–20 (MKLLKVAAIAAIVFSGSALA), serve as a signal peptide directing secretion. The segment at 71-90 (TQHGGGNGADVGQGSDDSSI) is disordered.

This sequence belongs to the CsgA/CsgB family.

The protein localises to the fimbrium. In terms of biological role, curlin is the structural subunit of the curli fimbriae. Curli are coiled surface structures that assemble preferentially at growth temperatures below 37 degrees Celsius. Curli can bind to fibronectin. In Escherichia coli (strain K12), this protein is Major curlin subunit (csgA).